Reading from the N-terminus, the 582-residue chain is Transcription factor PCF5 (582 aa).

Disordered regions lie at residues 30–78 (AAGK…QHDH) and 123–195 (SPMG…GGGG). The segment covering 51 to 64 (GGDGGGVGGGGSGG) has biased composition (gly residues). The TCP domain maps to 213–271 (RKDRHSKVCTARGPRDRRVRLSAHTAIQFYDVQDRLGYDRPSKAVDWLIKNAKDAIDKL). 3 disordered regions span residues 283–306 (GAGA…ENSD), 402–423 (MFHH…TTQQ), and 548–582 (RLPA…ASHH).

In terms of assembly, forms homodimers and heterodimers with PCF2.

It is found in the nucleus. Transcription activator. Binds the promoter core sequence 5'-GGNCC-3'. The sequence is that of Transcription factor PCF5 (PCF5) from Oryza sativa subsp. indica (Rice).